A 136-amino-acid chain; its full sequence is Large ribosomal subunit protein uL16 (136 aa).

Residues 1–17 (MLQPKRTKFRKRHKGRN) show a composition bias toward basic residues. The interval 1–21 (MLQPKRTKFRKRHKGRNRGLA) is disordered.

It belongs to the universal ribosomal protein uL16 family. Part of the 50S ribosomal subunit.

Its function is as follows. Binds 23S rRNA and is also seen to make contacts with the A and possibly P site tRNAs. The protein is Large ribosomal subunit protein uL16 of Buchnera aphidicola subsp. Acyrthosiphon kondoi (Acyrthosiphon kondoi symbiotic bacterium).